The chain runs to 380 residues: Cytochrome b (380 aa).

A run of 4 helical transmembrane segments spans residues 33–53 (FGSL…FLAM), 77–98 (WLIR…FLHV), 113–133 (WNMG…GYVL), and 178–198 (FFAF…VHLL). Heme b is bound by residues H83 and H97. Residues H182 and H196 each coordinate heme b. Residue H201 coordinates a ubiquinone. 4 helical membrane passes run 226-246 (IKDL…VLFF), 288-308 (LGGV…PLLH), 320-340 (ITQT…WIGG), and 347-367 (FIMI…IFMP).

It belongs to the cytochrome b family. In terms of assembly, the cytochrome bc1 complex contains 11 subunits: 3 respiratory subunits (MT-CYB, CYC1 and UQCRFS1), 2 core proteins (UQCRC1 and UQCRC2) and 6 low-molecular weight proteins (UQCRH/QCR6, UQCRB/QCR7, UQCRQ/QCR8, UQCR10/QCR9, UQCR11/QCR10 and a cleavage product of UQCRFS1). This cytochrome bc1 complex then forms a dimer. Heme b is required as a cofactor.

Its subcellular location is the mitochondrion inner membrane. Component of the ubiquinol-cytochrome c reductase complex (complex III or cytochrome b-c1 complex) that is part of the mitochondrial respiratory chain. The b-c1 complex mediates electron transfer from ubiquinol to cytochrome c. Contributes to the generation of a proton gradient across the mitochondrial membrane that is then used for ATP synthesis. The protein is Cytochrome b (MT-CYB) of Synaptomys borealis (Northern bog lemming).